The primary structure comprises 576 residues: Quinone-reactive Ni/Fe-hydrogenase large chain (576 aa).

Residues C62, C65, C547, and C550 each contribute to the Ni(2+) site.

It belongs to the [NiFe]/[NiFeSe] hydrogenase large subunit family. In terms of assembly, heterodimer of a large and a small subunit. Ni(2+) serves as cofactor.

The protein localises to the cell membrane. The catalysed reaction is H2 + a menaquinone = a menaquinol. This enzyme recycles the H(2) produced by nitrogenase to increase the production of ATP and to protect nitrogenase against inhibition or damage by O(2) under carbon- or phosphate-limited conditions. This is Quinone-reactive Ni/Fe-hydrogenase large chain (hydB) from Wolinella succinogenes (strain ATCC 29543 / DSM 1740 / CCUG 13145 / JCM 31913 / LMG 7466 / NCTC 11488 / FDC 602W) (Vibrio succinogenes).